The following is a 155-amino-acid chain: UPF0060 membrane protein MA_3936 (155 aa).

The next 3 helical transmembrane spans lie at 8–28, 35–55, and 62–82; these read LCPF…ICLW, AVFG…PTFQ, and VYAA…LFVD.

It belongs to the UPF0060 family.

The protein resides in the cell membrane. This is UPF0060 membrane protein MA_3936 from Methanosarcina acetivorans (strain ATCC 35395 / DSM 2834 / JCM 12185 / C2A).